We begin with the raw amino-acid sequence, 469 residues long: Glutamate--tRNA ligase (469 aa).

The short motif at 9–19 is the 'HIGH' region element; it reads PSPTGFLHVGG. 4 residues coordinate Zn(2+): cysteine 98, cysteine 100, cysteine 125, and aspartate 127. The 'KMSKS' region signature appears at 236-240; that stretch reads KLSKR. Lysine 239 is a binding site for ATP.

Belongs to the class-I aminoacyl-tRNA synthetase family. Glutamate--tRNA ligase type 1 subfamily. In terms of assembly, monomer. Zn(2+) is required as a cofactor.

Its subcellular location is the cytoplasm. The enzyme catalyses tRNA(Glu) + L-glutamate + ATP = L-glutamyl-tRNA(Glu) + AMP + diphosphate. In terms of biological role, catalyzes the attachment of glutamate to tRNA(Glu) in a two-step reaction: glutamate is first activated by ATP to form Glu-AMP and then transferred to the acceptor end of tRNA(Glu). The sequence is that of Glutamate--tRNA ligase from Shewanella sp. (strain W3-18-1).